A 77-amino-acid polypeptide reads, in one-letter code: U9-lycotoxin-Ls1a (77 aa).

An N-terminal signal peptide occupies residues 1-20 (MKLLLFTALVLVVIVSLIEA). The propeptide occupies 21–26 (EAENER).

It belongs to the neurotoxin 19 (CSTX) family. 08 (U8-Lctx) subfamily. In terms of processing, contains 4 disulfide bonds. As to expression, expressed by the venom gland.

It is found in the secreted. This chain is U9-lycotoxin-Ls1a, found in Lycosa singoriensis (Wolf spider).